Here is an 84-residue protein sequence, read N- to C-terminus: ATP synthase subunit c (84 aa).

2 consecutive transmembrane segments (helical) span residues 10–30 (IAVG…FALL) and 53–73 (FIIA…ALLF).

It belongs to the ATPase C chain family. In terms of assembly, F-type ATPases have 2 components, F(1) - the catalytic core - and F(0) - the membrane proton channel. F(1) has five subunits: alpha(3), beta(3), gamma(1), delta(1), epsilon(1). F(0) has three main subunits: a(1), b(2) and c(10-14). The alpha and beta chains form an alternating ring which encloses part of the gamma chain. F(1) is attached to F(0) by a central stalk formed by the gamma and epsilon chains, while a peripheral stalk is formed by the delta and b chains.

Its subcellular location is the cell inner membrane. Its function is as follows. F(1)F(0) ATP synthase produces ATP from ADP in the presence of a proton or sodium gradient. F-type ATPases consist of two structural domains, F(1) containing the extramembraneous catalytic core and F(0) containing the membrane proton channel, linked together by a central stalk and a peripheral stalk. During catalysis, ATP synthesis in the catalytic domain of F(1) is coupled via a rotary mechanism of the central stalk subunits to proton translocation. Key component of the F(0) channel; it plays a direct role in translocation across the membrane. A homomeric c-ring of between 10-14 subunits forms the central stalk rotor element with the F(1) delta and epsilon subunits. This is ATP synthase subunit c from Vibrio alginolyticus.